The sequence spans 159 residues: 2-C-methyl-D-erythritol 2,4-cyclodiphosphate synthase (159 aa).

Positions 10 and 12 each coordinate a divalent metal cation. Residues 10–12 (DVH) and 36–37 (HS) each bind 4-CDP-2-C-methyl-D-erythritol 2-phosphate. An a divalent metal cation-binding site is contributed by His-44. 4-CDP-2-C-methyl-D-erythritol 2-phosphate-binding positions include 58–60 (DIG) and Arg-144.

It belongs to the IspF family. Homotrimer. Requires a divalent metal cation as cofactor.

The enzyme catalyses 4-CDP-2-C-methyl-D-erythritol 2-phosphate = 2-C-methyl-D-erythritol 2,4-cyclic diphosphate + CMP. It functions in the pathway isoprenoid biosynthesis; isopentenyl diphosphate biosynthesis via DXP pathway; isopentenyl diphosphate from 1-deoxy-D-xylulose 5-phosphate: step 4/6. Functionally, involved in the biosynthesis of isopentenyl diphosphate (IPP) and dimethylallyl diphosphate (DMAPP), two major building blocks of isoprenoid compounds. Catalyzes the conversion of 4-diphosphocytidyl-2-C-methyl-D-erythritol 2-phosphate (CDP-ME2P) to 2-C-methyl-D-erythritol 2,4-cyclodiphosphate (ME-CPP) with a corresponding release of cytidine 5-monophosphate (CMP). The polypeptide is 2-C-methyl-D-erythritol 2,4-cyclodiphosphate synthase (Paraburkholderia phymatum (strain DSM 17167 / CIP 108236 / LMG 21445 / STM815) (Burkholderia phymatum)).